Reading from the N-terminus, the 262-residue chain is Tethering factor for nuclear proteasome cut8 (262 aa).

Belongs to the cut8/STS1 family. Binds the proteasome. The N-terminal part (residues 1 to 72) is polyubiquitinated by rhp6, which is required for the interaction with the proteasome.

The protein resides in the nucleus envelope. Together with nucleoporin alm1, tethers the proteasome to the nuclear envelope. Involved in ubiquitin-mediated protein degradation and facilitates the degradation of nuclear proteins like mitotic cyclin and cut2. Required for normal progression of anaphase. In Schizosaccharomyces pombe (strain 972 / ATCC 24843) (Fission yeast), this protein is Tethering factor for nuclear proteasome cut8.